Here is a 416-residue protein sequence, read N- to C-terminus: Adenylosuccinate synthetase (416 aa).

GTP is bound by residues 12–18 (GDEGKGK) and 40–42 (GHT). Aspartate 13 serves as the catalytic Proton acceptor. The Mg(2+) site is built by aspartate 13 and glycine 40. Residues 13–16 (DEGK), 38–41 (NAGH), threonine 125, arginine 139, glutamine 220, threonine 235, and arginine 299 contribute to the IMP site. The active-site Proton donor is the histidine 41. Position 295 to 301 (295 to 301 (TTTGRPR)) interacts with substrate. Residues arginine 301, 327-329 (KLD), and 405-407 (STS) contribute to the GTP site.

This sequence belongs to the adenylosuccinate synthetase family. In terms of assembly, homodimer. Requires Mg(2+) as cofactor.

The protein localises to the cytoplasm. The enzyme catalyses IMP + L-aspartate + GTP = N(6)-(1,2-dicarboxyethyl)-AMP + GDP + phosphate + 2 H(+). The protein operates within purine metabolism; AMP biosynthesis via de novo pathway; AMP from IMP: step 1/2. Functionally, plays an important role in the de novo pathway of purine nucleotide biosynthesis. Catalyzes the first committed step in the biosynthesis of AMP from IMP. The polypeptide is Adenylosuccinate synthetase (Nitratiruptor sp. (strain SB155-2)).